Consider the following 500-residue polypeptide: Lysine--tRNA ligase (500 aa).

Residues glutamate 410 and glutamate 417 each contribute to the Mg(2+) site.

This sequence belongs to the class-II aminoacyl-tRNA synthetase family. In terms of assembly, homodimer. Requires Mg(2+) as cofactor.

It localises to the cytoplasm. It carries out the reaction tRNA(Lys) + L-lysine + ATP = L-lysyl-tRNA(Lys) + AMP + diphosphate. The sequence is that of Lysine--tRNA ligase from Pseudomonas syringae pv. syringae (strain B728a).